We begin with the raw amino-acid sequence, 429 residues long: Fc receptor-like protein 1 (429 aa).

Residues 1–16 (MLPRLLLLICAPLCEP) form the signal peptide. 3 consecutive Ig-like C2-type domains span residues 17–104 (AELF…SQIN), 109–200 (PVAD…VSIT), and 208–291 (PILM…EAVT). Residues 17–307 (AELFLIASPS…TGARSNHLTS (291 aa)) are Extracellular-facing. 3 disulfides stabilise this stretch: Cys-38-Cys-86, Cys-134-Cys-183, and Cys-229-Cys-276. An N-linked (GlcNAc...) asparagine glycan is attached at Asn-293. A helical transmembrane segment spans residues 308-328 (GVIEGLLSTLGPATVALLFCY). At 329-429 (GLKRKIGRRS…ITDVDYEDAM (101 aa)) the chain is on the cytoplasmic side. 5 consecutive short sequence motifs (ITIM motif) follow at residues 354–359 (FTYLNS), 367–372 (PIYENV), 379–384 (EVYSLA), 410–415 (DIYSRL), and 423–428 (VDYEDA).

In terms of assembly, interacts with ABL1. Interacts with GRB2 and SOS1. Interacts with SHIP-1/INPP5D. Post-translationally, phosphorylated on tyrosines upon activation. Primarily expressed in secondary lymphoid tissues by mature subsets of B-cells. Detected in spleen, lymph node, heart, skeletal muscle, kidney, liver and placenta. Specifically expressed by mature B lineage cells with higher expression in naive versus memory B-cells (at protein level).

It localises to the cell membrane. Type I transmembrane surface glycoprotein preferentially expressed by B-cells that regulates BCR-mediated signaling responses. Recruits ABL1 as the intracellular effector molecule to enhance B-cell activation. Also plays a negative role by suppressing ERK activation under homeostatic and BCR-stimulated conditions in a GRB2-dependent manner. This is Fc receptor-like protein 1 (FCRL1) from Homo sapiens (Human).